A 1184-amino-acid chain; its full sequence is von Willebrand factor A domain-containing protein 3A (1184 aa).

An N-terminal signal peptide occupies residues Met1–Gly24. Residues Gly40–Gly62 form a disordered region. Residues Lys50 to Gly62 are compositionally biased toward polar residues. The stretch at Thr333–Leu357 forms a coiled coil. The 198-residue stretch at Arg511–Leu708 folds into the VWFA 1 domain. A glycan (N-linked (GlcNAc...) asparagine) is linked at Asn709. The disordered stretch occupies residues Leu729 to Ser780. Over residues Ser765–Pro776 the composition is skewed to basic and acidic residues. Residues Lys959 to Phe1131 form the VWFA 2 domain.

The protein resides in the secreted. This chain is von Willebrand factor A domain-containing protein 3A (VWA3A), found in Homo sapiens (Human).